The primary structure comprises 309 residues: Probable lipid kinase YegS-like (309 aa).

One can recognise a DAGKc domain in the interval 1-133 (MPLTHIRLLL…IDIIRANNNY (133 aa)). Residues Ser39, 65 to 71 (GDGSLNE), and Thr95 each bind ATP. Leu214, Asp217, and Leu219 together coordinate Mg(2+). Catalysis depends on Glu273, which acts as the Proton acceptor.

This sequence belongs to the diacylglycerol/lipid kinase family. YegS lipid kinase subfamily. It depends on Mg(2+) as a cofactor. Requires Ca(2+) as cofactor.

It is found in the cytoplasm. Its function is as follows. Probably phosphorylates lipids; the in vivo substrate is unknown. The chain is Probable lipid kinase YegS-like from Shewanella frigidimarina (strain NCIMB 400).